The primary structure comprises 392 residues: Protein NolC (392 aa).

The J domain maps to 2-71 (KRDLYETLGV…RAAYDRYGHA (70 aa)). 2 disordered regions span residues 103–142 (RRDD…QDGA) and 157–244 (LGRE…TGLR). Over residues 157–170 (LGREAGHQPEDLRH) the composition is skewed to basic and acidic residues. Residues 171 to 185 (LPGLRPYPRRPGLLL) show a composition bias toward low complexity. Positions 186 to 203 (DRTHLPDLRRSRSDDHRS) are enriched in basic and acidic residues. A compositionally biased stretch (basic residues) spans 227–241 (HRGRHAYPPLRRGRT).

The polypeptide is Protein NolC (nolC) (Rhizobium fredii (Sinorhizobium fredii)).